A 121-amino-acid polypeptide reads, in one-letter code: Cell division protein FtsB (121 aa).

At 1 to 6 the chain is on the cytoplasmic side; it reads MRNWRW. A helical membrane pass occupies residues 7–24; sequence LLLVLAVLLAWLQYRFWF. Residues 25 to 121 lie on the Periplasmic side of the membrane; that stretch reads GPGNSGEVMM…PASTDPVDHP (97 aa). A coiled-coil region spans residues 31–66; that stretch reads EVMMLEAQVAHQTQDNEGLRQRNQALAAEVKDLKDG. Positions 94 to 121 are disordered; that stretch reads APLPAPASPETAAPAQQAPASTDPVDHP. Low complexity predominate over residues 101–121; sequence SPETAAPAQQAPASTDPVDHP.

It belongs to the FtsB family. Part of a complex composed of FtsB, FtsL and FtsQ.

It is found in the cell inner membrane. Essential cell division protein. May link together the upstream cell division proteins, which are predominantly cytoplasmic, with the downstream cell division proteins, which are predominantly periplasmic. This chain is Cell division protein FtsB, found in Xanthomonas oryzae pv. oryzae (strain MAFF 311018).